The sequence spans 148 residues: MGFLNGYFLWVKAFHVIAVISWMAALFYLPRLFVYHAENAHKKEFVGVVQIQEKKLYSFIASPAMGFTLITGILMLLIEPTLFKSGGWLHAKLALVVLLLAYHFYCKKCMRELEKDPTRRNARFYRVFNEAPTILMILIVILVVVKPF.

4 consecutive transmembrane segments (helical) span residues 7–27 (YFLWVKAFHVIAVISWMAALF), 58–78 (SFIASPAMGFTLITGILMLLI), 86–106 (GGWLHAKLALVVLLLAYHFYC), and 128–148 (FNEAPTILMILIVILVVVKPF). A heme-binding site is contributed by His15. Heme is bound at residue Lys92.

It belongs to the HemJ family. Homodimer. Heme b serves as cofactor.

It is found in the cell membrane. It carries out the reaction protoporphyrinogen IX + 3 A = protoporphyrin IX + 3 AH2. Its pathway is porphyrin-containing compound metabolism; protoporphyrin-IX biosynthesis; protoporphyrin-IX from protoporphyrinogen-IX: step 1/1. In terms of biological role, catalyzes the oxidation of protoporphyrinogen IX to protoporphyrin IX. Is involved in the biosynthesis of tetrapyrrole molecules like heme. Does not use oxygen or artificial electron acceptors such as menadione or benzoquinone. This Helicobacter pylori (strain ATCC 700392 / 26695) (Campylobacter pylori) protein is Protoporphyrinogen IX oxidase.